We begin with the raw amino-acid sequence, 629 residues long: ATP-dependent DNA helicase II subunit 2 (629 aa).

One can recognise a Ku domain in the interval S254–Q476. Residues D608 to S620 are compositionally biased toward basic and acidic residues. Positions D608–N629 are disordered.

It belongs to the ku80 family. Heterodimer of YKU70/HDF1 and YKU80/HDF2. Interacts with SIR4.

The protein resides in the nucleus. Its subcellular location is the chromosome. The protein localises to the telomere. It carries out the reaction ATP + H2O = ADP + phosphate + H(+). Functionally, single-stranded DNA-dependent ATP-dependent helicase. Involved in non-homologous end joining (NHEJ) DNA double strand break repair. DNA-binding is sequence-independent but has a high affinity to nicks in double-stranded DNA and to the ends of duplex DNA. Binds to naturally occurring chromosomal ends, and therefore provides chromosomal end protection. Appears to have a role in recruitment of telomerase and CDC13 to the telomere and the subsequent telomere elongation. Required also for telomere recombination to repair telomeric ends in the absence of telomerase. KU70, of the KU70/KU80 heterodimer, binds to the stem loop of TLC1, the RNA component of telomerase. Involved in telomere maintenance. Interacts with telomeric repeats and subtelomeric sequences thereby controlling telomere length and protecting against subtelomeric rearrangement. Maintains telomeric chromatin, which is involved in silencing the expression of genes located at the telomere. Required for mating-type switching. The chain is ATP-dependent DNA helicase II subunit 2 (YKU80) from Saccharomyces cerevisiae (strain ATCC 204508 / S288c) (Baker's yeast).